Here is a 258-residue protein sequence, read N- to C-terminus: Protein UL24 homolog (258 aa).

The protein belongs to the herpesviridae UL24 family.

The protein resides in the virion. The protein localises to the host cytoplasm. Its subcellular location is the host nucleus. It is found in the host nucleolus. It localises to the host Golgi apparatus. Functionally, may participate in nuclear egress of viral particles. Plays a role in the dispersal of several host nucleolar proteins including NCL/nucleolin and NPM1. Since deletion of host NCL/nucleolin negatively impact on nuclear egress, UL24 supposedly acts on this process through its effect on host nucleoli. The chain is Protein UL24 homolog from Varicella-zoster virus (strain Dumas) (HHV-3).